The primary structure comprises 82 residues: Toxin NaTx-13 (82 aa).

In terms of domain architecture, LCN-type CS-alpha/beta spans Pro6–Gly70. Cystine bridges form between Cys16/Cys69, Cys20/Cys44, Cys30/Cys49, and Cys34/Cys51.

This sequence belongs to the long (4 C-C) scorpion toxin superfamily. Sodium channel inhibitor family. As to expression, expressed by the venom gland.

It is found in the secreted. In terms of biological role, probable sodium channel inhibitor. In Centruroides sculpturatus (Arizona bark scorpion), this protein is Toxin NaTx-13.